A 147-amino-acid chain; its full sequence is HTH-type transcriptional regulator HmrR (147 aa).

In terms of domain architecture, HTH merR-type spans 1-69 (MNIGEASKVS…VEQIKELLAL (69 aa)). Residues 4–23 (GEASKVSGVSSKMIRYYEQI) constitute a DNA-binding region (H-T-H motif).

In terms of assembly, homodimer.

The protein resides in the cytoplasm. Regulates the transcription of actP. It detects cytoplasmic copper stress and activates transcription in response to increasing copper concentrations. In the absence of copper, it negatively regulates the transcription of actP. This chain is HTH-type transcriptional regulator HmrR (hmrR), found in Sinorhizobium medicae (strain WSM419) (Ensifer medicae).